The sequence spans 711 residues: K(+)-insensitive pyrophosphate-energized proton pump (711 aa).

Helical transmembrane passes span 7-27, 58-78, 85-105, 145-165, and 179-199; these read LIYGVIVIAALVIIGLIKFIF, IASLALIVAVIIVVANYYGHL, ALSFALHVGFAFITGAFCSAL, LAVTALSLFGVATLFLAYGGL, and IVGFGFGASFVALFAQLGGGI. Lys-202 provides a ligand contact to substrate. Positions 205, 209, and 235 each coordinate Mg(2+). The next 6 helical transmembrane spans lie at 251-271, 274-294, 311-331, 343-363, 403-423, and 431-451; these read TAAENIGAMILGVGLYPIFGW, ILFPLVARAIGIIASIIGIFF, GYFVTTVVNLIALFFAVKVML, YLLLYGAVVTGVILSYIFVFL, LPVIFISAAIYIAYKLGEMAI, and LYGTAIATMGMLSTTAYILAM. Asp-459 lines the Mg(2+) pocket. The next 4 helical transmembrane spans lie at 495-515, 535-555, 602-622, and 624-644; these read YAIGSAALATFLLFSAYLDEV, EVFIGAFIGAMIVYLFSSTAI, EMVIPGLIVVVTPILVGVILG, and EAAAAFLMIGTISGVILALYL. Residues Asp-652, Asp-678, and Asp-682 each contribute to the Ca(2+) site. Lys-685 serves as a coordination point for substrate. Residues 690–710 form a helical membrane-spanning segment; sequence PSLHVLIKLISTITLVFVALF.

Belongs to the H(+)-translocating pyrophosphatase (TC 3.A.10) family. K(+)-insensitive subfamily. As to quaternary structure, homodimer. Mg(2+) is required as a cofactor.

The protein localises to the cell membrane. It carries out the reaction diphosphate + H2O + H(+)(in) = 2 phosphate + 2 H(+)(out). Its function is as follows. Proton pump that utilizes the energy of pyrophosphate hydrolysis as the driving force for proton movement across the membrane. Generates a proton motive force. The sequence is that of K(+)-insensitive pyrophosphate-energized proton pump from Caldanaerobacter subterraneus subsp. tengcongensis (strain DSM 15242 / JCM 11007 / NBRC 100824 / MB4) (Thermoanaerobacter tengcongensis).